The following is a 298-amino-acid chain: Mitochondrial glycine transporter (298 aa).

Solcar repeat units follow at residues 5–84 (TKTR…MRTA), 105–189 (LTTY…AKEV), and 211–295 (TSTL…LIKL). The next 6 membrane-spanning stretches (helical) occupy residues 11 to 36 (LIGGFFGGLTSAVALQPLDLLKTRIQ), 59 to 85 (GTLPSAIRTSLGSALYLSSLNLMRTAI), 111 to 136 (LISGALARGAVGYMTMPVTVIKVRYE), 164 to 187 (GFGPTLVRDAPYSGIYVLLYEKAK), 215 to 241 (VNSTSAILSACLATTITAPFDTIKTRM), and 270 to 288 (GLSMRLTRKALSAGIAWGI).

It belongs to the mitochondrial carrier (TC 2.A.29) family. SLC25A38 subfamily.

It localises to the mitochondrion inner membrane. The catalysed reaction is glycine(in) = glycine(out). Functionally, mitochondrial glycine transporter that imports glycine into the mitochondrial matrix. Plays an important role in providing glycine for the first enzymatic step in heme biosynthesis, the condensation of glycine with succinyl-CoA to produce 5-aminolevulinate (ALA) in the mitochondrial matrix. This Vanderwaltozyma polyspora (strain ATCC 22028 / DSM 70294 / BCRC 21397 / CBS 2163 / NBRC 10782 / NRRL Y-8283 / UCD 57-17) (Kluyveromyces polysporus) protein is Mitochondrial glycine transporter.